The primary structure comprises 295 residues: Alpha-ketoglutarate-dependent sulfate ester dioxygenase (295 aa).

Residue His71 participates in substrate binding. His98 and Asp100 together coordinate Fe cation. Val101 is a binding site for substrate. Thr125 contacts 2-oxoglutarate. Residue His252 participates in Fe cation binding. Positions 263 and 267 each coordinate 2-oxoglutarate.

It belongs to the TfdA dioxygenase family. The cofactor is Fe(2+).

It catalyses the reaction a primary linear alkyl sulfate ester + 2-oxoglutarate + O2 = an aldehyde + sulfate + succinate + CO2 + H(+). It carries out the reaction 2-ethylhexyl sulfate + 2-oxoglutarate + O2 = 2-ethylhexanal + sulfate + succinate + CO2 + H(+). The enzyme catalyses hexyl sulfate + 2-oxoglutarate + O2 = hexanal + sulfate + succinate + CO2 + H(+). The catalysed reaction is pentyl sulfate + 2-oxoglutarate + O2 = pentanal + sulfate + succinate + CO2 + H(+). It catalyses the reaction heptyl sulfate + 2-oxoglutarate + O2 = heptanal + sulfate + succinate + CO2 + H(+). In terms of biological role, alpha-ketoglutarate-dependent sulfate ester dioxygenase, which oxidizes medium-chain alkyl-sulfate esters. Shows preference for 2-ethylhexyl sulfate (2-EHS) in vitro, leading to the formation of succinate and 2-ethylhexanal. Has likely a role in sulfate scavenging in vivo. Also causes the inactivation of the 2-carboxyquinoxaline Ty38c (an antitubercular compound that inhibits DprE1) via oxidative decarboxylation, using Ty38c instead of alpha-ketoglutarate as a substrate. Is thus responsible for primary resistance of M.tuberculosis to Ty38c in vitro. Overexpression of Rv3406 causes resistance to Ty38c. This is Alpha-ketoglutarate-dependent sulfate ester dioxygenase from Mycobacterium tuberculosis (strain ATCC 25618 / H37Rv).